A 1040-amino-acid chain; its full sequence is Multidrug resistance protein MdtB (1040 aa).

The next 12 membrane-spanning stretches (helical) occupy residues 16 to 36 (FIMRPVATTLLMVAILLAGII), 347 to 367 (LMMAIALVVMIIYLFLRNIPA), 369 to 389 (IIPGVAVPLSLIGTFAVMVFL), 396 to 416 (LTLMALTIATGFVVDDAIVVI), 440 to 460 (IGFTIISLIFSLIAVLIPLLF), 472 to 492 (FAITLAVAILISAVVSLTLTP), 537 to 557 (WLTLSVALSTLLLSVLLWVFI), 863 to 883 (LGSTVWLIVAAVVAMYIVLGI), 888 to 908 (FIHPITILSTLPTAGVGALLA), 911 to 931 (IAGSELDVIAIIGIILLIGIV), 968 to 988 (ILMTTLAALLGALPLMLSTGV), and 998 to 1018 (IGMVGGLIVSQVLTLFTTPVI).

The protein belongs to the resistance-nodulation-cell division (RND) (TC 2.A.6) family. MdtB subfamily. In terms of assembly, part of a tripartite efflux system composed of MdtA, MdtB and MdtC. MdtB forms a heteromultimer with MdtC.

The protein resides in the cell inner membrane. This Shigella boydii serotype 4 (strain Sb227) protein is Multidrug resistance protein MdtB.